The sequence spans 1331 residues: Receptor-type adenylate cyclase B (1331 aa).

Topologically, residues 1 to 33 (MYADATHPRRACWCGAGGVSGCVRQRHAYRCSR) are cytoplasmic. A helical transmembrane segment spans residues 34–54 (LLAGVLLIVGALTLTLAVSTV). Residues 55–898 (PAAWAAGAVA…SHALTPAQRG (844 aa)) lie on the Extracellular side of the membrane. 5 N-linked (GlcNAc...) asparagine glycosylation sites follow: N255, N429, N558, N574, and N657. A helical transmembrane segment spans residues 899 to 919 (GAIAGIALLTVILLAVAGLAL). Residues 920–1331 (YCCMDNRNND…PTVCNVRGAH (412 aa)) lie on the Cytoplasmic side of the membrane. In terms of domain architecture, Guanylate cyclase spans 940 to 1094 (TLLFTDIESS…DTSNMAARTE (155 aa)). Mg(2+) contacts are provided by D945 and D988.

It belongs to the adenylyl cyclase class-3 family. It depends on Mg(2+) as a cofactor.

It is found in the membrane. It catalyses the reaction ATP = 3',5'-cyclic AMP + diphosphate. Could act as a receptor for an unknown ligand. The sequence is that of Receptor-type adenylate cyclase B (RAC-B) from Leishmania donovani.